Reading from the N-terminus, the 82-residue chain is Histidine-rich protein (82 aa).

In Plasmodium falciparum (isolate fcm17 / Senegal), this protein is Histidine-rich protein.